A 360-amino-acid chain; its full sequence is Phospho-N-acetylmuramoyl-pentapeptide-transferase (360 aa).

A run of 10 helical transmembrane segments spans residues Thr-25–Asp-45, Thr-71–Ala-91, Leu-94–Tyr-114, Ser-129–Leu-148, Thr-168–Gly-188, Gly-199–Ala-219, Leu-239–Pro-259, Ile-263–Ala-283, Phe-288–Val-308, and Gln-337–Leu-357.

It belongs to the glycosyltransferase 4 family. MraY subfamily. Requires Mg(2+) as cofactor.

It localises to the cell inner membrane. The catalysed reaction is UDP-N-acetyl-alpha-D-muramoyl-L-alanyl-gamma-D-glutamyl-meso-2,6-diaminopimeloyl-D-alanyl-D-alanine + di-trans,octa-cis-undecaprenyl phosphate = di-trans,octa-cis-undecaprenyl diphospho-N-acetyl-alpha-D-muramoyl-L-alanyl-D-glutamyl-meso-2,6-diaminopimeloyl-D-alanyl-D-alanine + UMP. The protein operates within cell wall biogenesis; peptidoglycan biosynthesis. In terms of biological role, catalyzes the initial step of the lipid cycle reactions in the biosynthesis of the cell wall peptidoglycan: transfers peptidoglycan precursor phospho-MurNAc-pentapeptide from UDP-MurNAc-pentapeptide onto the lipid carrier undecaprenyl phosphate, yielding undecaprenyl-pyrophosphoryl-MurNAc-pentapeptide, known as lipid I. The sequence is that of Phospho-N-acetylmuramoyl-pentapeptide-transferase from Rhodopseudomonas palustris (strain BisA53).